The primary structure comprises 135 residues: Cilia- and flagella-associated protein 144 (135 aa).

The disordered stretch occupies residues 76 to 100 (QGPKKKYSETQTEAQEIGWDPNPLI).

The protein belongs to the CFAP144 family. Microtubule inner protein component of sperm flagellar doublet microtubules. In terms of tissue distribution, predominantly expressed in tissues containing motile cilia.

It localises to the cytoplasm. It is found in the cytoskeleton. The protein localises to the cilium axoneme. The protein resides in the flagellum axoneme. The sequence is that of Cilia- and flagella-associated protein 144 from Mus musculus (Mouse).